The primary structure comprises 499 residues: MKRSISIFITCLLITLLTMGGMIASPASAAGTKTPVAKNGQLSIKGTQLVNRDGKAVQLKGISSHGLQWYGEYVNKDSLKWLRDDWGITVFRAAMYTADGGYIDNPSVKNKVKEAVEAAKELGIYVIIDWHILNDGNPNQNKEKAKEFFKEMSSLYGNTPNVIYEIANEPNGDVNWKRDIKPYAEEVISVIRKNDPDNIIIVGTGTWSQDVNDAADDQLKDANVMYALHFYAGTHGQFLRDKANYALSKGAPIFVTEWGTSDASGNGGVFLDQSREWLKYLDSKTISWVNWNLSDKQESSSALKPGASKTGGWRLSDLSASGTFVRENILGTKDSTKDIPETPSKDKPTQENGISVQYRAGDGSMNSNQIRPQLQIKNNGNTTVDLKDVTARYWYKAKNKGQNFDCDYAQIGCGNVTHKFVTLHKPKQGADTYLELGFKNGTLAPGASTGNIQLRLHNDDWSNYAQSGDYSFFKSNTFKTTKKITLYDQGKLIWGTEPN.

The N-terminal stretch at methionine 1–alanine 29 is a signal peptide. Substrate is bound by residues histidine 65, tryptophan 69 to tyrosine 70, tyrosine 96, and histidine 131. Glutamate 169 acts as the Proton donor in catalysis. Tyrosine 231 serves as a coordination point for substrate. Residue glutamate 257 is the Nucleophile of the active site. Substrate contacts are provided by residues alanine 263–serine 264, tryptophan 291, and lysine 296–glutamate 298. One can recognise a CBM3 domain in the interval glutamine 350–asparagine 499.

It belongs to the glycosyl hydrolase 5 (cellulase A) family.

The enzyme catalyses Endohydrolysis of (1-&gt;4)-beta-D-glucosidic linkages in cellulose, lichenin and cereal beta-D-glucans.. The polypeptide is Endoglucanase (eglS) (Bacillus subtilis (strain 168)).